The primary structure comprises 550 residues: NAD(P)H-quinone oxidoreductase chain 4 3 (550 aa).

Transmembrane regions (helical) follow at residues 5 to 25 (FPWL…IPLL), 36 to 56 (YALI…WQHF), 86 to 106 (ISAP…FSAW), 114 to 134 (LFYA…VAKD), 135 to 155 (LFLF…LVCI), 168 to 188 (FLLY…ALSL), 212 to 232 (MWLY…FPLH), 243 to 263 (SSPV…YGLM), 277 to 297 (FAPL…FSSF), 311 to 331 (VSHM…GING), 332 to 352 (AMLQ…LAGV), 375 to 395 (VFAM…MSGF), 418 to 438 (ITVF…LSML), and 489 to 509 (IFIA…PKLL).

The protein belongs to the complex I subunit 4 family.

The protein resides in the cellular thylakoid membrane. It carries out the reaction a plastoquinone + NADH + (n+1) H(+)(in) = a plastoquinol + NAD(+) + n H(+)(out). It catalyses the reaction a plastoquinone + NADPH + (n+1) H(+)(in) = a plastoquinol + NADP(+) + n H(+)(out). In terms of biological role, NDH-1 shuttles electrons from NAD(P)H, via FMN and iron-sulfur (Fe-S) centers, to quinones in the respiratory chain. The immediate electron acceptor for the enzyme in this species is believed to be plastoquinone. Couples the redox reaction to proton translocation (for every two electrons transferred, four hydrogen ions are translocated across the cytoplasmic membrane), and thus conserves the redox energy in a proton gradient. The polypeptide is NAD(P)H-quinone oxidoreductase chain 4 3 (Picosynechococcus sp. (strain ATCC 27264 / PCC 7002 / PR-6) (Agmenellum quadruplicatum)).